The primary structure comprises 123 residues: uncharacterized protein (123 aa).

Residue Thr56 is modified to Phosphothreonine. Residues Ser73, Ser87, Ser97, Ser113, and Ser119 each carry the phosphoserine modification.

Highly expressed in the kidney (at protein level).

It is found in the cytoplasm. This is an uncharacterized protein from Felis catus (Cat).